Here is a 386-residue protein sequence, read N- to C-terminus: L-lactate dehydrogenase (386 aa).

One can recognise an FMN hydroxy acid dehydrogenase domain in the interval 1–380; it reads MIISAASDYR…SGDALSRVTR (380 aa). Substrate is bound at residue tyrosine 24. FMN is bound by residues serine 106 and glutamine 127. Tyrosine 129 contributes to the substrate binding site. FMN is bound at residue threonine 155. Arginine 164 contributes to the substrate binding site. Lysine 251 lines the FMN pocket. The active-site Proton acceptor is histidine 275. Residue arginine 278 coordinates substrate. Residue 306–330 participates in FMN binding; it reads DSGIRSGLDVVRMLALGADAVLLGR.

It belongs to the FMN-dependent alpha-hydroxy acid dehydrogenase family. FMN is required as a cofactor.

It localises to the cell inner membrane. The enzyme catalyses (S)-lactate + A = pyruvate + AH2. In terms of biological role, catalyzes the conversion of L-lactate to pyruvate. Is coupled to the respiratory chain. The chain is L-lactate dehydrogenase from Xanthomonas campestris pv. campestris (strain B100).